The chain runs to 345 residues: Heat-inducible transcription repressor HrcA (345 aa).

This sequence belongs to the HrcA family.

Functionally, negative regulator of class I heat shock genes (grpE-dnaK-dnaJ and groELS operons). Prevents heat-shock induction of these operons. The polypeptide is Heat-inducible transcription repressor HrcA (Tetragenococcus halophilus (Pediococcus halophilus)).